Here is a 275-residue protein sequence, read N- to C-terminus: Probable endonuclease 4 (275 aa).

Zn(2+) contacts are provided by histidine 66, histidine 106, glutamate 140, aspartate 172, histidine 175, histidine 209, aspartate 222, histidine 224, and glutamate 254.

The protein belongs to the AP endonuclease 2 family. Zn(2+) is required as a cofactor.

The catalysed reaction is Endonucleolytic cleavage to 5'-phosphooligonucleotide end-products.. Endonuclease IV plays a role in DNA repair. It cleaves phosphodiester bonds at apurinic or apyrimidinic (AP) sites, generating a 3'-hydroxyl group and a 5'-terminal sugar phosphate. The sequence is that of Probable endonuclease 4 from Halobacterium salinarum (strain ATCC 29341 / DSM 671 / R1).